A 365-amino-acid polypeptide reads, in one-letter code: tRNA-specific 2-thiouridylase MnmA (365 aa).

ATP-binding positions include 14–21 and Leu-40; that span reads AMSGGVDS. The Nucleophile role is filled by Cys-108. Cys-108 and Cys-204 are disulfide-bonded. Position 132 (Gly-132) interacts with ATP. The interval 154 to 156 is interaction with tRNA; sequence KDQ. The Cysteine persulfide intermediate role is filled by Cys-204.

Belongs to the MnmA/TRMU family.

It localises to the cytoplasm. The enzyme catalyses S-sulfanyl-L-cysteinyl-[protein] + uridine(34) in tRNA + AH2 + ATP = 2-thiouridine(34) in tRNA + L-cysteinyl-[protein] + A + AMP + diphosphate + H(+). Functionally, catalyzes the 2-thiolation of uridine at the wobble position (U34) of tRNA, leading to the formation of s(2)U34. The sequence is that of tRNA-specific 2-thiouridylase MnmA from Rickettsia felis (strain ATCC VR-1525 / URRWXCal2) (Rickettsia azadi).